The primary structure comprises 199 residues: Protein MA_3591 (199 aa).

In terms of domain architecture, AMMECR1 spans 5–196; it reads TEGRVAVKLA…EKEPEGEVIE (192 aa).

The sequence is that of Protein MA_3591 from Methanosarcina acetivorans (strain ATCC 35395 / DSM 2834 / JCM 12185 / C2A).